A 65-amino-acid chain; its full sequence is uncharacterized protein (65 aa).

This is an uncharacterized protein from Pasteurella multocida (strain Pm70).